Here is a 40-residue protein sequence, read N- to C-terminus: Photosystem II reaction center protein J (40 aa).

A helical membrane pass occupies residues 8-28 (IPLWLIGTVTGIIVIGLLGVF).

It belongs to the PsbJ family. PSII is composed of 1 copy each of membrane proteins PsbA, PsbB, PsbC, PsbD, PsbE, PsbF, PsbH, PsbI, PsbJ, PsbK, PsbL, PsbM, PsbT, PsbX, PsbY, PsbZ, Psb30/Ycf12, at least 3 peripheral proteins of the oxygen-evolving complex and a large number of cofactors. It forms dimeric complexes.

The protein localises to the plastid. The protein resides in the chloroplast thylakoid membrane. In terms of biological role, one of the components of the core complex of photosystem II (PSII). PSII is a light-driven water:plastoquinone oxidoreductase that uses light energy to abstract electrons from H(2)O, generating O(2) and a proton gradient subsequently used for ATP formation. It consists of a core antenna complex that captures photons, and an electron transfer chain that converts photonic excitation into a charge separation. The protein is Photosystem II reaction center protein J of Pinus thunbergii (Japanese black pine).